A 357-amino-acid polypeptide reads, in one-letter code: Hemolysin VllY (357 aa).

VOC domains follow at residues 12 to 132 (GFEF…FVDR) and 162 to 313 (EIDH…IFTQ). Fe cation contacts are provided by histidine 165, histidine 243, and glutamate 322.

Belongs to the 4HPPD family. Requires Fe cation as cofactor.

The chain is Hemolysin VllY (vllY) from Vibrio vulnificus (strain CMCP6).